The primary structure comprises 619 residues: 1-deoxy-D-xylulose-5-phosphate synthase (619 aa).

Thiamine diphosphate is bound by residues H74 and 115–117 (GHS). D146 serves as a coordination point for Mg(2+). Thiamine diphosphate contacts are provided by residues 147–148 (GA), N175, Y285, and E365. Residue N175 participates in Mg(2+) binding.

Belongs to the transketolase family. DXPS subfamily. In terms of assembly, homodimer. Mg(2+) is required as a cofactor. Requires thiamine diphosphate as cofactor.

It catalyses the reaction D-glyceraldehyde 3-phosphate + pyruvate + H(+) = 1-deoxy-D-xylulose 5-phosphate + CO2. Its pathway is metabolic intermediate biosynthesis; 1-deoxy-D-xylulose 5-phosphate biosynthesis; 1-deoxy-D-xylulose 5-phosphate from D-glyceraldehyde 3-phosphate and pyruvate: step 1/1. In terms of biological role, catalyzes the acyloin condensation reaction between C atoms 2 and 3 of pyruvate and glyceraldehyde 3-phosphate to yield 1-deoxy-D-xylulose-5-phosphate (DXP). The protein is 1-deoxy-D-xylulose-5-phosphate synthase of Clostridium perfringens (strain SM101 / Type A).